The following is a 1444-amino-acid chain: ABC transporter G family member 39 (1444 aa).

The tract at residues 1-36 (MDIVRMGSVASGGGSVRRTASSWRGTSGRSDAFGRS) is disordered. Positions 19–29 (TASSWRGTSGR) are enriched in polar residues. The ABC transporter 1 domain maps to 154–426 (LSAMRIVSSG…FEAMGFKCPE (273 aa)). ATP is bound at residue 187-194 (GPPGSGKT). Residues 504-717 (ELTKACFSRE…AQNAIAVNEF (214 aa)) enclose the ABC transmembrane type-2 1 domain. The next 6 membrane-spanning stretches (helical) occupy residues 522-542 (FVYI…MTVF), 555-575 (GAIF…NGFA), 610-630 (IPIS…VMGF), 642-662 (VLLV…AALG), 667-687 (VADT…GFLI), and 754-774 (IGVG…ILFL). The ABC transporter 2 domain maps to 846–1098 (ITFDNIRYSV…HLINYFEGIQ (253 aa)). An ATP-binding site is contributed by 891–898 (GVSGAGKT). Residues 1171 to 1385 (TQCMACLWKQ…TLYGLVASQY (215 aa)) form the ABC transmembrane type-2 2 domain. The next 7 membrane-spanning stretches (helical) occupy residues 1192–1212 (ATRI…FLNL), 1220–1240 (LDLF…GIQN), 1278–1298 (IPHI…LIGF), 1305–1325 (FFWY…YGMM), 1335–1355 (IAAI…GFLI), 1362–1382 (IWWR…GLVA), and 1414–1434 (LGYV…VFAF).

This sequence belongs to the ABC transporter superfamily. ABCG family. PDR (TC 3.A.1.205) subfamily.

It is found in the membrane. Its function is as follows. May be a general defense protein. The chain is ABC transporter G family member 39 from Oryza sativa subsp. japonica (Rice).